Reading from the N-terminus, the 337-residue chain is Tetraacyldisaccharide 4'-kinase (337 aa).

55–62 (TAGGNGKT) lines the ATP pocket.

It belongs to the LpxK family.

It carries out the reaction a lipid A disaccharide + ATP = a lipid IVA + ADP + H(+). It participates in glycolipid biosynthesis; lipid IV(A) biosynthesis; lipid IV(A) from (3R)-3-hydroxytetradecanoyl-[acyl-carrier-protein] and UDP-N-acetyl-alpha-D-glucosamine: step 6/6. Transfers the gamma-phosphate of ATP to the 4'-position of a tetraacyldisaccharide 1-phosphate intermediate (termed DS-1-P) to form tetraacyldisaccharide 1,4'-bis-phosphate (lipid IVA). The polypeptide is Tetraacyldisaccharide 4'-kinase (Sodalis glossinidius (strain morsitans)).